A 483-amino-acid chain; its full sequence is MTAAVTENNGAGSASAVAGRVVRVIGPVVDVEFPRGAVPELFNALNAEITLPSVAKTLTLEVAQHLGDNLVRTVSMQPTDGLVRGTAVTDSGKPISVPVGDVVKGHVFNALGDCLDTPGLGRDGEQWGIHRKPPAFDQLEGKTEILETGIKVIDLLTPYVKGGKIGLFGGAGVGKTVLIQEMITRIAREFSGTSVFAGVGERTREGTDLHLEMEEMGVLQDTALVFGQMDEPPGTRMRVALSALTMAEYFRDVQGQDVLLFIDNIFRFTQAGSEVSTLLGRMPSAVGYQPTLADEMGELQERITSTRGRSITSLQAIYVPADDYTDPAPATTFAHLDATTELSRPISQMGIYPAVDPLSSTSRILEPGIVGAEHFRVANEVKRILQKYKELQDIIAILGMDELQEEDKVLVGRARRIQKFLGQNFIVAEKFTGEPGSVVPLRDTIEAFDRVCKGEFDHLPEQAFNSCGGLDDVEAAAKKMAGK.

169-176 (GGAGVGKT) contacts ATP.

It belongs to the ATPase alpha/beta chains family. As to quaternary structure, F-type ATPases have 2 components, CF(1) - the catalytic core - and CF(0) - the membrane proton channel. CF(1) has five subunits: alpha(3), beta(3), gamma(1), delta(1), epsilon(1). CF(0) has three main subunits: a(1), b(2) and c(9-12). The alpha and beta chains form an alternating ring which encloses part of the gamma chain. CF(1) is attached to CF(0) by a central stalk formed by the gamma and epsilon chains, while a peripheral stalk is formed by the delta and b chains.

Its subcellular location is the cell membrane. It catalyses the reaction ATP + H2O + 4 H(+)(in) = ADP + phosphate + 5 H(+)(out). Its function is as follows. Produces ATP from ADP in the presence of a proton gradient across the membrane. The catalytic sites are hosted primarily by the beta subunits. The chain is ATP synthase subunit beta from Rhodococcus erythropolis (strain PR4 / NBRC 100887).